Consider the following 425-residue polypeptide: E3 ubiquitin-protein ligase CBLL2 (425 aa).

An RING-type zinc finger spans residues 57-97; sequence CDKCDLPIKIYGRIIPCKHAFCYHCANLYDKVGYKVCPRCR. Residues 96 to 154 are HYB domain; it reads CRYPVLRIEAHKRGSVFMCSIVQQCKRTYLSQKSLQAHIKRRHKRARKQVTSASLEKVR. The segment at 112–138 adopts a C2H2-type zinc-finger fold; the sequence is FMCSIVQQCKRTYLSQKSLQAHIKRRH. Disordered regions lie at residues 241–297 and 382–425; these read DHIQ…HQMP and TDAM…HRRY. Pro residues predominate over residues 398 to 408; it reads PCPPTRSPPPS. Basic residues predominate over residues 412–425; that stretch reads GRSHHSHQRRHRRY.

Homodimer. Exclusively expressed in testis and sperm, including spermatocytes, round and elongated spermatids, and Leydig cells.

The protein localises to the cytoplasm. The enzyme catalyses S-ubiquitinyl-[E2 ubiquitin-conjugating enzyme]-L-cysteine + [acceptor protein]-L-lysine = [E2 ubiquitin-conjugating enzyme]-L-cysteine + N(6)-ubiquitinyl-[acceptor protein]-L-lysine.. It functions in the pathway protein modification; protein ubiquitination. Its function is as follows. E3 ubiquitin ligase catalyzing the covalent attachment of ubiquitin moieties onto substrate proteins. May operate on tyrosine-phosphorylated SRC substrates. This chain is E3 ubiquitin-protein ligase CBLL2, found in Homo sapiens (Human).